The chain runs to 1175 residues: Tyrosine-protein phosphatase non-receptor type 21 (1175 aa).

In terms of domain architecture, FERM spans 23-308 (LVARIQLLNN…ARHKFYRLNQ (286 aa)). The segment covering 395-421 (YSAHSTNSLNTPQPYLQPSPMSSNPSI) has biased composition (polar residues). A disordered region spans residues 395-445 (YSAHSTNSLNTPQPYLQPSPMSSNPSIPGSDVMRPDYIPSHRHSALIPPSY). Residues serine 577, serine 589, serine 590, serine 637, serine 673, serine 710, serine 711, serine 798, serine 800, and serine 805 each carry the phosphoserine modification. A disordered region spans residues 663–702 (DVAPRTFSAGSQSSVFSDKVKQEGTEEQGSGGYSHKKSLS). The region spanning 897–1168 (VFTEYERILK…TFVYRVLIQF (272 aa)) is the Tyrosine-protein phosphatase domain. Residues glutamate 1068, 1109–1115 (CSAGVGR), and glutamine 1153 contribute to the substrate site. Catalysis depends on cysteine 1109, which acts as the Phosphocysteine intermediate.

This sequence belongs to the protein-tyrosine phosphatase family. Non-receptor class subfamily. In terms of tissue distribution, particularly abundantly in adrenal glands.

The protein localises to the cytoplasm. It is found in the cytoskeleton. It catalyses the reaction O-phospho-L-tyrosyl-[protein] + H2O = L-tyrosyl-[protein] + phosphate. The sequence is that of Tyrosine-protein phosphatase non-receptor type 21 (Ptpn21) from Rattus norvegicus (Rat).